Consider the following 954-residue polypeptide: MWILESELFDGKRLWLRPGKTYLFGRTVAEAGQLTISDKTVSRKHLTIHIDNVPEGGGRNLRSRSNVIVEDLESKKGTLVNGVQIRGQKTTLTEDVNEIKLGLCPKTLKIRWHPIVLSFSFTSKELRADPWTNLRDSLEQLDIKYSAEYEPTTTHVVSKKRNTSKGLQALINGRYIVTDSFINAIVQATEIPEGEEGASSALEQDFEANWPNPLDHLPPRGEEPGNHTTETYAPDARRQEVFDGYTFIFYEKKQYDNLFPAISAGKGKALLKEVVPNRTRVDEFVRYVKSVAGEKGLGSFEDGSEGKGVVVVRYTPKGEDSAWYAEFFTKFAQQLDHRPIDQKEFLEAILACDASMLRRPLEAMSQPVSVSASVEPQSSEKVRPAVEDRKEVEQSAPKQLQPSAEVPATEESAPAPHRRERRTGRSRFKGFDFDDDDIIIETPQAQSSTQVPALPQVPSASQDSLFVSQREPSLAPSEPMLEEEAPCNTRTTRQTHRKRVLSPLPEHDNSALLDEIAPITAAVKRRRIEAGQDPVPPLPEPEPEREDEDVEMVEESPPRKGKKGAATTAKGKGKKIKQEDEENVLELARRRREEAEAAAAAERQRLAQLGDDDIDYAAIRRLHIIEEIEVRQPEPHGPNRTREQDIADGRWDPRWNGRKNFKRFRRQGETGVRMPVQSVIVPLEEVRTKEYGIGDDYWLEDEEGRVPRRPKETQTQERSTIGSVRDGSGFAAAAASGKGKEKDKENEKEVGRPGSSAAAAKQRSKPAPRRTVLTLDSSDEDEDEPSPHAPGIDTISDSEPEVVSSFPSVIPASEPSRSRAAKAAERANALRSSAHSSQSQTQQHRESQLSTGSSKIQLTLAPGSSSLSFSRSGTAAGRNENGKRPFGSFVSGESTASGRGMSVESGSVRGESASKRQKQGSSGGGSFLATRRKDDGSEEESEDDELKFRFGRRR.

The region spanning 22-85 (YLFGRTVAEA…KGTLVNGVQI (64 aa)) is the FHA domain. BRCT domains follow at residues 107 to 186 (TLKI…NAIV) and 244 to 349 (GYTF…LEAI). Over residues 368–377 (VSVSASVEPQ) the composition is skewed to polar residues. Disordered stretches follow at residues 368-431 (VSVS…FKGF), 444-506 (QAQS…PLPE), 528-580 (IEAG…KQED), 630-654 (VRQPEPHGPNRTREQDIADGRWDPR), and 692-954 (GIGD…GRRR). The segment covering 378-393 (SSEKVRPAVEDRKEVE) has biased composition (basic and acidic residues). Positions 416-428 (PHRRERRTGRSRF) are enriched in basic residues. Positions 458-471 (PSASQDSLFVSQRE) are enriched in polar residues. Over residues 541-554 (PEPEREDEDVEMVE) the composition is skewed to acidic residues. 2 stretches are compositionally biased toward basic and acidic residues: residues 640–654 (RTREQDIADGRWDPR) and 704–715 (GRVPRRPKETQT). The segment covering 726 to 737 (DGSGFAAAAASG) has biased composition (low complexity). Over residues 738-751 (KGKEKDKENEKEVG) the composition is skewed to basic and acidic residues. Composition is skewed to low complexity over residues 801 to 815 (EVVSSFPSVIPASEP) and 826 to 842 (RANALRSSAHSSQSQTQ). Residues 936–945 (GSEEESEDDE) show a composition bias toward acidic residues.

This sequence belongs to the Nibrin family. As to quaternary structure, component of the MRN complex composed of two heterodimers RAD50 and MRE11 associated with a single NBS1.

It is found in the nucleus. Its subcellular location is the chromosome. Functionally, component of the MRN complex, which plays a central role in double-strand break (DSB) repair, DNA recombination, maintenance of telomere integrity and meiosis. The MRN complex is involved in the repair of DNA double-strand breaks (DSBs) via homologous recombination (HR), an error-free mechanism which primarily occurs during S and G2 phases. The complex (1) mediates the end resection of damaged DNA, which generates proper single-stranded DNA, a key initial steps in HR, and is (2) required for the recruitment of other repair factors and efficient activation of ATM and ATR upon DNA damage. The MRN complex possesses single-strand endonuclease activity and double-strand-specific 3'-5' exonuclease activity, which are provided by MRE11, to initiate end resection, which is required for single-strand invasion and recombination. Within the MRN complex, NBS1 acts as a protein-protein adapter, which specifically recognizes and binds phosphorylated proteins, promoting their recruitment to DNA damage sites. Recruits MRE11 and RAD50 components of the MRN complex to DSBs in response to DNA damage. This is DNA repair and telomere maintenance protein NBS1 from Chaetomium thermophilum (strain DSM 1495 / CBS 144.50 / IMI 039719) (Thermochaetoides thermophila).